Reading from the N-terminus, the 284-residue chain is Averufin oxidase A (284 aa).

The first 23 residues, 1 to 23 (MPTYALLGATGATGSAILRCLLA), serve as a signal peptide directing secretion. N-linked (GlcNAc...) asparagine glycans are attached at residues asparagine 62, asparagine 86, and asparagine 190.

This sequence belongs to the avfA family.

It functions in the pathway mycotoxin biosynthesis. In terms of biological role, averufin oxidase A; part of the fragmented gene cluster that mediates the biosynthesis of dothistromin (DOTH), a polyketide toxin very similar in structure to the aflatoxin precursor, versicolorin B. The first step of the pathway is the conversion of acetate to norsolorinic acid (NOR) and requires the fatty acid synthase subunits hexA and hexB, as well as the polyketide synthase pksA. PksA combines a hexanoyl starter unit and 7 malonyl-CoA extender units to synthesize the precursor NOR. The hexanoyl starter unit is provided to the acyl-carrier protein (ACP) domain by the fungal fatty acid synthase hexA/hexB. The second step is the conversion of NOR to averantin (AVN) and requires the norsolorinic acid ketoreductase nor1, which catalyzes the dehydration of norsolorinic acid to form (1'S)-averantin. The cytochrome P450 monooxygenase avnA then catalyzes the hydroxylation of AVN to 5'hydroxyaverantin (HAVN). The next step is performed by adhA that transforms HAVN to averufin (AVF). Averufin might then be converted to hydroxyversicolorone by cypX and avfA. Hydroxyversicolorone is further converted versiconal hemiacetal acetate (VHA) by moxY. VHA is then the substrate for the versiconal hemiacetal acetate esterase est1 to yield versiconal (VAL). Versicolorin B synthase vbsA then converts VAL to versicolorin B (VERB) by closing the bisfuran ring. Then, the activity of the versicolorin B desaturase verB leads to versicolorin A (VERA). DotB, a predicted chloroperoxidase, may perform epoxidation of the A-ring of VERA. Alternatively, a cytochrome P450, such as cypX or avnA could catalyze this step. It is also possible that another, uncharacterized, cytochrome P450 enzyme is responsible for this step. Opening of the epoxide could potentially be achieved by the epoxide hydrolase epoA. However, epoA seems not to be required for DOTH biosynthesis, but other epoxide hydrolases may have the ability to complement this hydrolysis. Alternatively, opening of the epoxide ring could be achieved non-enzymatically. The next step is the deoxygenation of ring A to yield the 5,8-dihydroxyanthraquinone which is most likely catalyzed by the NADPH dehydrogenase encoded by ver1. The last stages of DOTH biosynthesis are proposed to involve hydroxylation of the bisfuran. OrdB and norB might have oxidative roles here. An alternative possibility is that cytochrome P450 monoogenases such as avnA and cypX might perform these steps in addition to previously proposed steps. The protein is Averufin oxidase A of Dothistroma septosporum (strain NZE10 / CBS 128990) (Red band needle blight fungus).